The following is a 362-amino-acid chain: Phosphoserine aminotransferase (362 aa).

Ser9 and Arg42 together coordinate L-glutamate. Pyridoxal 5'-phosphate contacts are provided by residues 76–77 (AR), Trp102, Thr153, Asp174, and Gln197. An N6-(pyridoxal phosphate)lysine modification is found at Lys198. 239-240 (NT) serves as a coordination point for pyridoxal 5'-phosphate.

The protein belongs to the class-V pyridoxal-phosphate-dependent aminotransferase family. SerC subfamily. As to quaternary structure, homodimer. It depends on pyridoxal 5'-phosphate as a cofactor.

Its subcellular location is the cytoplasm. It catalyses the reaction O-phospho-L-serine + 2-oxoglutarate = 3-phosphooxypyruvate + L-glutamate. The catalysed reaction is 4-(phosphooxy)-L-threonine + 2-oxoglutarate = (R)-3-hydroxy-2-oxo-4-phosphooxybutanoate + L-glutamate. It functions in the pathway amino-acid biosynthesis; L-serine biosynthesis; L-serine from 3-phospho-D-glycerate: step 2/3. Its pathway is cofactor biosynthesis; pyridoxine 5'-phosphate biosynthesis; pyridoxine 5'-phosphate from D-erythrose 4-phosphate: step 3/5. Its function is as follows. Catalyzes the reversible conversion of 3-phosphohydroxypyruvate to phosphoserine and of 3-hydroxy-2-oxo-4-phosphonooxybutanoate to phosphohydroxythreonine. This chain is Phosphoserine aminotransferase, found in Photorhabdus laumondii subsp. laumondii (strain DSM 15139 / CIP 105565 / TT01) (Photorhabdus luminescens subsp. laumondii).